The primary structure comprises 73 residues: Methionyl-tRNA formyltransferase (73 aa).

This sequence belongs to the Fmt family.

The enzyme catalyses L-methionyl-tRNA(fMet) + (6R)-10-formyltetrahydrofolate = N-formyl-L-methionyl-tRNA(fMet) + (6S)-5,6,7,8-tetrahydrofolate + H(+). Functionally, attaches a formyl group to the free amino group of methionyl-tRNA(fMet). The formyl group appears to play a dual role in the initiator identity of N-formylmethionyl-tRNA by promoting its recognition by IF2 and preventing the misappropriation of this tRNA by the elongation apparatus. The sequence is that of Methionyl-tRNA formyltransferase (fmt) from Rickettsia rhipicephali.